The chain runs to 158 residues: Endoribonuclease YbeY (158 aa).

Zn(2+)-binding residues include His-119, His-123, and His-129.

This sequence belongs to the endoribonuclease YbeY family. Zn(2+) is required as a cofactor.

The protein localises to the cytoplasm. Its function is as follows. Single strand-specific metallo-endoribonuclease involved in late-stage 70S ribosome quality control and in maturation of the 3' terminus of the 16S rRNA. The polypeptide is Endoribonuclease YbeY (Acinetobacter baumannii (strain ACICU)).